Reading from the N-terminus, the 463-residue chain is MNYQSYSDTICAISSGNNINQPISIIRISGKNAQSIVSKIFSGKVGENKTITYGFIKENSEIVDEVLVSWFLGEPQGDITVYNNYVGEPLIEINAHGGMIVTNKILELLISNGARLAEPGEFTRRAFLNGKLDLSKADAIHNLIMSKTRLQARNEASKLKGSASKVIKDLLKELSLLIGSIEVGIDYPEYIDDYEEDLKANSKEDINLTRINKLIARLEKIVKSSETALNYFEGIKLAIVGKPNVGKSSLLNTMLKEDKAIVTNVAGTTRDIVEGIYYLDNFIFKIIDTAGIRKTRQEIEKIGIERSYKAILDADIVLHLFDNLNSEDEFDLDIKKIVQENNKNYIKVVNKSDLKSDIKWSDDFIKISAKNNDIKNLEDHLLKIYSGFDFNSEDIFATARQIKLFKESLEYAYAAREEIKNQLTYITAIVDLNNLFDTLQLIIGNSNREDLLDEMFKNFCLGK.

Residues R27, E92, and K131 each contribute to the (6S)-5-formyl-5,6,7,8-tetrahydrofolate site. The TrmE-type G domain maps to 234 to 386 (GIKLAIVGKP…LEDHLLKIYS (153 aa)). Residue N244 coordinates K(+). Residues 244–249 (NVGKSS), 263–269 (TNVAGTT), and 288–291 (DTAG) each bind GTP. S248 contacts Mg(2+). K(+) contacts are provided by T263, V265, and T268. Position 269 (T269) interacts with Mg(2+). Position 463 (K463) interacts with (6S)-5-formyl-5,6,7,8-tetrahydrofolate.

It belongs to the TRAFAC class TrmE-Era-EngA-EngB-Septin-like GTPase superfamily. TrmE GTPase family. Homodimer. Heterotetramer of two MnmE and two MnmG subunits. K(+) serves as cofactor.

It localises to the cytoplasm. In terms of biological role, exhibits a very high intrinsic GTPase hydrolysis rate. Involved in the addition of a carboxymethylaminomethyl (cmnm) group at the wobble position (U34) of certain tRNAs, forming tRNA-cmnm(5)s(2)U34. This Mycoplasmopsis synoviae (strain 53) (Mycoplasma synoviae) protein is tRNA modification GTPase MnmE.